The following is a 518-amino-acid chain: Ethanolamine kinase (518 aa).

The segment covering 1–19 (MGTETKSNSYTGQISTSGG) has biased composition (polar residues). The interval 1–88 (MGTETKSNSY…DIRAKPEDKS (88 aa)) is disordered. The segment covering 33–68 (QTVNQQTLSLSQSNQVQNQLNSHSNSNSYPNPSGSE) has biased composition (low complexity). A compositionally biased stretch (basic and acidic residues) spans 69-88 (NKNENEQNSRDIRAKPEDKS). 2 positions are modified to phosphoserine: serine 190 and serine 194.

The protein belongs to the choline/ethanolamine kinase family.

The protein localises to the cytoplasm. The enzyme catalyses ethanolamine + ATP = phosphoethanolamine + ADP + H(+). It participates in phospholipid metabolism; phosphatidylethanolamine biosynthesis; phosphatidylethanolamine from ethanolamine: step 1/3. Its function is as follows. Highly specific for ethanolamine phosphorylation. May be a rate-controlling step in phosphatidylethanolamine biosynthesis. The sequence is that of Ethanolamine kinase (eas) from Drosophila melanogaster (Fruit fly).